We begin with the raw amino-acid sequence, 377 residues long: Alanine racemase (377 aa).

Lys39 serves as the catalytic Proton acceptor; specific for D-alanine. At Lys39 the chain carries N6-(pyridoxal phosphate)lysine. Substrate is bound at residue Arg137. Tyr266 functions as the Proton acceptor; specific for L-alanine in the catalytic mechanism. Met314 lines the substrate pocket.

It belongs to the alanine racemase family. It depends on pyridoxal 5'-phosphate as a cofactor.

It carries out the reaction L-alanine = D-alanine. The protein operates within amino-acid biosynthesis; D-alanine biosynthesis; D-alanine from L-alanine: step 1/1. In terms of biological role, catalyzes the interconversion of L-alanine and D-alanine. May also act on other amino acids. In Symbiobacterium thermophilum (strain DSM 24528 / JCM 14929 / IAM 14863 / T), this protein is Alanine racemase (alr).